A 515-amino-acid polypeptide reads, in one-letter code: SWI/SNF-related matrix-associated actin-dependent regulator of chromatin subfamily D member 1 (515 aa).

A disordered region spans residues M1–M128. The span at G14 to G23 shows a compositional bias: gly residues. The tract at residues A43 to D167 is interaction with ESR1, NR1H4, NR3C1, PGR and SMARCA4. Asymmetric dimethylarginine is present on residues R68 and R88. Residue K101 forms a Glycyl lysine isopeptide (Lys-Gly) (interchain with G-Cter in SUMO2) linkage. Over residues A104–Q117 the composition is skewed to low complexity. Residues I168 to E474 are interaction with SMARCC1 and SMARCC2. A necessary for GR/NR3C1-mediated remodeling and transcription from chromatin; required for GR/NR3C1 interaction with the BRG1/SMARCA4 complex in vivo region spans residues R180–T515. T203 carries the phosphothreonine modification. K223 bears the N6-acetyllysine mark. The SWIB/MDM2 domain occupies Y290 to P367. Positions A412–F440 form a coiled coil.

This sequence belongs to the SMARCD family. In terms of assembly, component of the multiprotein chromatin-remodeling complexes SWI/SNF: SWI/SNF-A (BAF), SWI/SNF-B (PBAF) and related complexes. The canonical complex contains a catalytic subunit (either SMARCA4/BRG1/BAF190A or SMARCA2/BRM/BAF190B), and at least SMARCE1, ACTL6A/BAF53, SMARCC1/BAF155, SMARCC2/BAF170, and SMARCB1/SNF5/BAF47. Other subunits specific to each of the complexes may also be present permitting several possible combinations developmentally and tissue specific. Component of the BAF complex, which includes at least actin (ACTB), ARID1A/BAF250A, ARID1B/BAF250B, SMARCA2/BRM, SMARCA4/BRG1/BAF190A, ACTL6A/BAF53, ACTL6B/BAF53B, SMARCE1/BAF57, SMARCC1/BAF155, SMARCC2/BAF170, SMARCB1/SNF5/INI1, and one or more SMARCD1/BAF60A, SMARCD2/BAF60B, or SMARCD3/BAF60C. In muscle cells, the BAF complex also contains DPF3. Component of neural progenitors-specific chromatin remodeling complex (npBAF complex) composed of at least, ARID1A/BAF250A or ARID1B/BAF250B, SMARCD1/BAF60A, SMARCD3/BAF60C, SMARCA2/BRM/BAF190B, SMARCA4/BRG1/BAF190A, SMARCB1/BAF47, SMARCC1/BAF155, SMARCE1/BAF57, SMARCC2/BAF170, PHF10/BAF45A, ACTL6A/BAF53A and actin. Component of neuron-specific chromatin remodeling complex (nBAF complex) composed of at least, ARID1A/BAF250A or ARID1B/BAF250B, SMARCD1/BAF60A, SMARCD3/BAF60C, SMARCA2/BRM/BAF190B, SMARCA4/BRG1/BAF190A, SMARCB1/BAF47, SMARCC1/BAF155, SMARCE1/BAF57, SMARCC2/BAF170, DPF1/BAF45B, DPF3/BAF45C, ACTL6B/BAF53B and actin. Component of the SWI/SNF-B (PBAF) chromatin remodeling complex, at least composed of SMARCA4/BRG1, SMARCB1/BAF47/SNF5, ACTL6A/BAF53A or ACTL6B/BAF53B, SMARCE1/BAF57, SMARCD1/BAF60A, SMARCD2/BAF60B, perhaps SMARCD3/BAF60C, SMARCC1/BAF155, SMARCC2/BAF170, PBRM1/BAF180, ARID2/BAF200 and actin (ACTB). Component of SWI/SNF (GBAF) subcomplex, which includes at least BICRA or BICRAL (mutually exclusive), BRD9, SS18, SMARCA2/BRM, SMARCA4/BRG1/BAF190A, ACTL6A/BAF53, SMARCC1/BAF155, and SMARCD1/BAF60A. Specifically interacts with the VDR heterodimer complex. Interacts with ESR1, NR3C1, NR1H4, PGR, SMARCA4, SMARCC1 and SMARCC2. Interacts with DPF2. Interacts with DPF3a (isoform 2 of DPF3/BAF45C) and with HDGFL2 in a DPF3a-dependent manner. Interacts with FOS, FOSB isoform 1 and 2, FOSL1 and FOSL2. Interacts with AKIRIN2. As to expression, ubiquitous.

The protein localises to the nucleus. Involved in transcriptional activation and repression of select genes by chromatin remodeling (alteration of DNA-nucleosome topology). Component of SWI/SNF chromatin remodeling complexes that carry out key enzymatic activities, changing chromatin structure by altering DNA-histone contacts within a nucleosome in an ATP-dependent manner. Belongs to the neural progenitors-specific chromatin remodeling complex (npBAF complex) and the neuron-specific chromatin remodeling complex (nBAF complex). During neural development a switch from a stem/progenitor to a postmitotic chromatin remodeling mechanism occurs as neurons exit the cell cycle and become committed to their adult state. The transition from proliferating neural stem/progenitor cells to postmitotic neurons requires a switch in subunit composition of the npBAF and nBAF complexes. As neural progenitors exit mitosis and differentiate into neurons, npBAF complexes which contain ACTL6A/BAF53A and PHF10/BAF45A, are exchanged for homologous alternative ACTL6B/BAF53B and DPF1/BAF45B or DPF3/BAF45C subunits in neuron-specific complexes (nBAF). The npBAF complex is essential for the self-renewal/proliferative capacity of the multipotent neural stem cells. The nBAF complex along with CREST plays a role regulating the activity of genes essential for dendrite growth. Has a strong influence on vitamin D-mediated transcriptional activity from an enhancer vitamin D receptor element (VDRE). May be a link between mammalian SWI-SNF-like chromatin remodeling complexes and the vitamin D receptor (VDR) heterodimer. Mediates critical interactions between nuclear receptors and the BRG1/SMARCA4 chromatin-remodeling complex for transactivation. The polypeptide is SWI/SNF-related matrix-associated actin-dependent regulator of chromatin subfamily D member 1 (Smarcd1) (Mus musculus (Mouse)).